The sequence spans 496 residues: Maturase K (496 aa).

It belongs to the intron maturase 2 family. MatK subfamily.

The protein resides in the plastid. It is found in the chloroplast. Its function is as follows. Usually encoded in the trnK tRNA gene intron. Probably assists in splicing its own and other chloroplast group II introns. This chain is Maturase K, found in Paeonia cambessedesii (Majorcan peony).